The following is a 688-amino-acid chain: SRSF protein kinase 2 (688 aa).

Residues 1 to 65 are disordered; the sequence is MSVNSEKSSS…EQEDPADYCK (65 aa). Over residues 22 to 43 the composition is skewed to pro residues; the sequence is LVPPPPPPPPPPPPPLPDPTPP. The segment covering 44–61 has biased composition (acidic residues); the sequence is EPEEEILGSDDEEQEDPA. A Phosphoserine modification is found at Ser-52. Residues 81 to 684 enclose the Protein kinase domain; that stretch reads YHVIRKLGWG…ASAGECLRHP (604 aa). Residues 87–95 and Lys-110 each bind ATP; that span reads LGWGHFSTV. Asp-214 (proton acceptor) is an active-site residue. Disordered stretches follow at residues 239–277, 329–444, and 469–501; these read WQKAGAPPPSGSAVSTAPQQKPIGKISKNKKKKLKKKQK, GLEE…GRHK, and SVLSEGSPLTEQEESSPSHDRSRTVSASSTGDL. Basic residues predominate over residues 265–277; that stretch reads SKNKKKKLKKKQK. Ser-380 is modified (phosphoserine). Acidic residues predominate over residues 397-421; sequence QLDDEDDDEEDCPNPEEYNLDEPNA. Polar residues predominate over residues 423-433; the sequence is SDYTYSSSYEQ. Ser-475 bears the Phosphoserine mark. The residue at position 478 (Thr-478) is a Phosphothreonine. Phosphoserine occurs at positions 484, 486, and 490. Position 492 is a phosphothreonine; by PKB/AKT1 (Thr-492). 2 positions are modified to phosphoserine: Ser-494 and Ser-497. Ser-588 carries the phosphoserine; by CK2 modification.

The protein belongs to the protein kinase superfamily. CMGC Ser/Thr protein kinase family. In terms of assembly, associates with U4/U6-U5 tri-small nuclear ribonucleoproteins (U4/U6-U5 tri-snRNPs). Interacts with PKB/AKT1 in a phosphorylation-dependent manner. The phosphorylated form (by PKB/AKT1) interacts with YWHAB and YWHAE. Interaction with YWHAB suppresses its cleavage by caspases and inhibits the release of its N-terminal pro-apoptotic fragment. Interacts with SFN. Interacts with ACIN1. Interacts with POLR2A/RNA polymerase II; the interaction occurs during the co-transcriptional formation of inappropriate R-loops. The cofactor is Mg(2+). Post-translationally, phosphorylation at Thr-492 by PKB/AKT1 enhances its stimulatory activity in triggering cyclin-D1 (CCND1) expression and promoting apoptosis in neurons, which can be blocked by YWHAB. It also enhances its protein kinase activity toward ACIN1 and SRSF2, promotes its nuclear translocation and prevents its proteolytic cleavage. In terms of processing, proteolytically cleaved at Asp-139 and Asp-403 by caspase-3 during apoptotic cell death. Cleavage at Asp-139 which is the major site of cleavage, produces a small N-terminal fragment that translocates into nucleus and promotes VP16-induced apoptosis. Highly expressed in brain, moderately expressed in heart and skeletal muscle and at low levels in lung, liver, and kidney.

It localises to the cytoplasm. The protein resides in the nucleus. Its subcellular location is the nucleoplasm. It is found in the nucleus speckle. The protein localises to the chromosome. The enzyme catalyses L-seryl-[protein] + ATP = O-phospho-L-seryl-[protein] + ADP + H(+). The catalysed reaction is L-threonyl-[protein] + ATP = O-phospho-L-threonyl-[protein] + ADP + H(+). Its activity is regulated as follows. Activated by phosphorylation on Ser-52 and Ser-588. Functionally, serine/arginine-rich protein-specific kinase which specifically phosphorylates its substrates at serine residues located in regions rich in arginine/serine dipeptides, known as RS domains and is involved in the phosphorylation of SR splicing factors and the regulation of splicing. Promotes neuronal apoptosis by up-regulating cyclin-D1 (CCND1) expression. This is done by the phosphorylation of SRSF2, leading to the suppression of p53/TP53 phosphorylation thereby relieving the repressive effect of p53/TP53 on cyclin-D1 (CCND1) expression. Phosphorylates ACIN1, and redistributes it from the nuclear speckles to the nucleoplasm, resulting in cyclin A1 but not cyclin A2 up-regulation. Plays an essential role in spliceosomal B complex formation via the phosphorylation of DDX23/PRP28. Probably by phosphorylating DDX23, leads to the suppression of incorrect R-loops formed during transcription; R-loops are composed of a DNA:RNA hybrid and the associated non-template single-stranded DNA. Can mediate hepatitis B virus (HBV) core protein phosphorylation. Plays a negative role in the regulation of HBV replication through a mechanism not involving the phosphorylation of the core protein but by reducing the packaging efficiency of the pregenomic RNA (pgRNA) without affecting the formation of the viral core particles. The sequence is that of SRSF protein kinase 2 from Homo sapiens (Human).